We begin with the raw amino-acid sequence, 532 residues long: Neutral amino acid transporter A (532 aa).

Met1 bears the N-acetylmethionine mark. A compositionally biased stretch (polar residues) spans Met1–Tyr10. The disordered stretch occupies residues Met1–Pro25. Over Met1–Arg41 the chain is Cytoplasmic. Low complexity predominate over residues Ala14–Pro25. 3 helical membrane passes run Gln42 to Leu62, Met88 to Ser108, and Ala119 to Ile139. Over Lys140–Thr216 the chain is Extracellular. N-linked (GlcNAc...) asparagine glycosylation is found at Asn201 and Asn206. Transmembrane regions (helical) follow at residues Glu217–Leu237, Ala257–Val277, Ile298–Phe318, Phe328–Thr348, Ile373–Ile393, and Val418–Ile438. The segment at Cys500–Leu532 is disordered. A phosphoserine mark is found at Ser507, Ser527, and Ser530.

This sequence belongs to the dicarboxylate/amino acid:cation symporter (DAACS) (TC 2.A.23) family. SLC1A4 subfamily. As to expression, expressed mostly in brain, muscle, and pancreas but detected in all tissues examined.

It is found in the membrane. It localises to the melanosome. It carries out the reaction L-threonine(in) + Na(+)(in) = L-threonine(out) + Na(+)(out). The enzyme catalyses L-serine(in) + Na(+)(in) = L-serine(out) + Na(+)(out). It catalyses the reaction L-cysteine(in) + Na(+)(in) = L-cysteine(out) + Na(+)(out). The catalysed reaction is L-alanine(in) + Na(+)(in) = L-alanine(out) + Na(+)(out). It carries out the reaction L-proline(in) + Na(+)(in) = L-proline(out) + Na(+)(out). The enzyme catalyses 4-hydroxy-L-proline(in) + Na(+)(in) = 4-hydroxy-L-proline(out) + Na(+)(out). Its function is as follows. Sodium-dependent neutral amino-acid transporter that mediates transport of alanine, serine, cysteine, proline, hydroxyproline and threonine. In Homo sapiens (Human), this protein is Neutral amino acid transporter A.